Here is a 322-residue protein sequence, read N- to C-terminus: Tetrahydromethanopterin S-methyltransferase subunit H (322 aa).

It belongs to the MtrH family. The complex is composed of 8 subunits; MtrA, MtrB, MtrC, MtrD, MtrE, MtrF, MtrG and MtrH.

It catalyses the reaction 5-methyl-5,6,7,8-tetrahydromethanopterin + coenzyme M + 2 Na(+)(in) = 5,6,7,8-tetrahydromethanopterin + methyl-coenzyme M + 2 Na(+)(out). Its pathway is one-carbon metabolism; methanogenesis from CO(2); methyl-coenzyme M from 5,10-methylene-5,6,7,8-tetrahydromethanopterin: step 2/2. Functionally, part of a complex that catalyzes the formation of methyl-coenzyme M and tetrahydromethanopterin from coenzyme M and methyl-tetrahydromethanopterin. This is an energy-conserving, sodium-ion translocating step. MtrH catalyzes the transfer of the methyl group from methyl-tetrahydromethanopterin to the corrinoid prosthetic group of MtrA. The polypeptide is Tetrahydromethanopterin S-methyltransferase subunit H (Methanopyrus kandleri (strain AV19 / DSM 6324 / JCM 9639 / NBRC 100938)).